The following is a 61-amino-acid chain: 14-3-3-like protein (61 aa).

The protein belongs to the 14-3-3 family.

This is 14-3-3-like protein from Zea mays (Maize).